Consider the following 267-residue polypeptide: Glucosamine-6-phosphate deaminase (267 aa).

Asp-72 functions as the Proton acceptor; for enolization step in the catalytic mechanism. The active-site For ring-opening step is the Asp-141. His-143 functions as the Proton acceptor; for ring-opening step in the catalytic mechanism. The active-site For ring-opening step is Glu-148.

It belongs to the glucosamine/galactosamine-6-phosphate isomerase family. NagB subfamily. As to quaternary structure, homohexamer.

It catalyses the reaction alpha-D-glucosamine 6-phosphate + H2O = beta-D-fructose 6-phosphate + NH4(+). The protein operates within amino-sugar metabolism; N-acetylneuraminate degradation; D-fructose 6-phosphate from N-acetylneuraminate: step 5/5. Its activity is regulated as follows. Allosterically activated by N-acetylglucosamine 6-phosphate (GlcNAc6P). Its function is as follows. Catalyzes the reversible isomerization-deamination of glucosamine 6-phosphate (GlcN6P) to form fructose 6-phosphate (Fru6P) and ammonium ion. The chain is Glucosamine-6-phosphate deaminase from Actinobacillus pleuropneumoniae serotype 3 (strain JL03).